The chain runs to 445 residues: Exodeoxyribonuclease 7 large subunit (445 aa).

It belongs to the XseA family. As to quaternary structure, heterooligomer composed of large and small subunits.

The protein resides in the cytoplasm. The catalysed reaction is Exonucleolytic cleavage in either 5'- to 3'- or 3'- to 5'-direction to yield nucleoside 5'-phosphates.. Bidirectionally degrades single-stranded DNA into large acid-insoluble oligonucleotides, which are then degraded further into small acid-soluble oligonucleotides. The chain is Exodeoxyribonuclease 7 large subunit from Xanthomonas axonopodis pv. citri (strain 306).